A 164-amino-acid polypeptide reads, in one-letter code: Leucine-rich single-pass membrane protein 2 (164 aa).

The chain crosses the membrane as a helical span at residues 97 to 117; sequence GFLLLLALLVLTCLVLALLAV.

Its subcellular location is the membrane. This Homo sapiens (Human) protein is Leucine-rich single-pass membrane protein 2 (LSMEM2).